Reading from the N-terminus, the 398-residue chain is Energy-coupling factor transporter ATP-binding protein EcfA2 (398 aa).

The 236-residue stretch at 5-240 (IELKDLEYAY…KELVRRARLK (236 aa)) folds into the ABC transporter domain. Residue 38–45 (GSNGAGKS) coordinates ATP.

This sequence belongs to the ABC transporter superfamily. Energy-coupling factor EcfA family. As to quaternary structure, forms a stable energy-coupling factor (ECF) transporter complex composed of 2 membrane-embedded substrate-binding proteins (S component), 2 ATP-binding proteins (A component) and 2 transmembrane proteins (T component).

Its subcellular location is the cell membrane. Functionally, ATP-binding (A) component of a common energy-coupling factor (ECF) ABC-transporter complex. Unlike classic ABC transporters this ECF transporter provides the energy necessary to transport a number of different substrates. The polypeptide is Energy-coupling factor transporter ATP-binding protein EcfA2 (Methanospirillum hungatei JF-1 (strain ATCC 27890 / DSM 864 / NBRC 100397 / JF-1)).